Reading from the N-terminus, the 103-residue chain is Small ribosomal subunit protein bS18c (103 aa).

It belongs to the bacterial ribosomal protein bS18 family. In terms of assembly, part of the 30S ribosomal subunit.

It is found in the plastid. The protein localises to the chloroplast. The polypeptide is Small ribosomal subunit protein bS18c (rps18) (Chlorella vulgaris (Green alga)).